The chain runs to 78 residues: MADSDKDELAEIAGFGYERARDELVNVVKMLEQGGMDLDESLALWERGEALANRCEEHLAGARKRVEDALAGSESDES.

This sequence belongs to the XseB family. As to quaternary structure, heterooligomer composed of large and small subunits.

The protein localises to the cytoplasm. It carries out the reaction Exonucleolytic cleavage in either 5'- to 3'- or 3'- to 5'-direction to yield nucleoside 5'-phosphates.. Bidirectionally degrades single-stranded DNA into large acid-insoluble oligonucleotides, which are then degraded further into small acid-soluble oligonucleotides. The protein is Exodeoxyribonuclease 7 small subunit of Nocardia farcinica (strain IFM 10152).